The chain runs to 208 residues: ATP-dependent Clp protease proteolytic subunit (208 aa).

Ser105 serves as the catalytic Nucleophile. His130 is a catalytic residue.

The protein belongs to the peptidase S14 family. As to quaternary structure, fourteen ClpP subunits assemble into 2 heptameric rings which stack back to back to give a disk-like structure with a central cavity, resembling the structure of eukaryotic proteasomes.

It localises to the cytoplasm. It carries out the reaction Hydrolysis of proteins to small peptides in the presence of ATP and magnesium. alpha-casein is the usual test substrate. In the absence of ATP, only oligopeptides shorter than five residues are hydrolyzed (such as succinyl-Leu-Tyr-|-NHMec, and Leu-Tyr-Leu-|-Tyr-Trp, in which cleavage of the -Tyr-|-Leu- and -Tyr-|-Trp bonds also occurs).. Its function is as follows. Cleaves peptides in various proteins in a process that requires ATP hydrolysis. Has a chymotrypsin-like activity. Plays a major role in the degradation of misfolded proteins. This Xylella fastidiosa (strain M23) protein is ATP-dependent Clp protease proteolytic subunit.